Reading from the N-terminus, the 565-residue chain is Liver carboxylesterase 1 (565 aa).

A signal peptide spans 1–18 (MWLCALSLISLTACLSLG). Cysteines 87 and 116 form a disulfide. Ser-221 (acyl-ester intermediate) is an active-site residue. A disulfide bridge links Cys-273 with Cys-284. Glu-353 functions as the Charge relay system in the catalytic mechanism. Ser-378 carries the post-translational modification Phosphoserine. Asn-388 carries an N-linked (GlcNAc...) asparagine glycan. The active-site Charge relay system is the His-466. Residue Asn-489 is glycosylated (N-linked (GlcNAc...) asparagine).

Belongs to the type-B carboxylesterase/lipase family. In terms of assembly, homotrimer and homohexamer. Binds to beta-glucuronidase. As to expression, detected in kidney, liver and lung.

Its subcellular location is the endoplasmic reticulum lumen. It is found in the cytoplasm. The protein localises to the lipid droplet. The catalysed reaction is a carboxylic ester + H2O = an alcohol + a carboxylate + H(+). The enzyme catalyses cholesteryl (9Z-octadecenoate) + H2O = cholesterol + (9Z)-octadecenoate + H(+). It catalyses the reaction 2-(5Z,8Z,11Z,14Z-eicosatetraenoyl)-glycerol + H2O = glycerol + (5Z,8Z,11Z,14Z)-eicosatetraenoate + H(+). It carries out the reaction prostaglandin E2 1-glyceryl ester + H2O = prostaglandin E2 + glycerol + H(+). The catalysed reaction is a cholesterol ester + H2O = cholesterol + a fatty acid + H(+). The enzyme catalyses prostaglandin F2alpha 1-glyceryl ester + H2O = prostaglandin F2alpha + glycerol + H(+). Involved in the detoxification of xenobiotics and in the activation of ester and amide prodrugs. Hydrolyzes aromatic and aliphatic esters, but has no catalytic activity toward amides or a fatty acyl-CoA ester. Displays fatty acid ethyl ester synthase activity, catalyzing the ethyl esterification of oleic acid to ethyloleate. Converts monoacylglycerides to free fatty acids and glycerol. Hydrolyzes of 2-arachidonoylglycerol and prostaglandins. Hydrolyzes cellular cholesteryl esters to free cholesterols and promotes reverse cholesterol transport (RCT) by facilitating both the initial and final steps in the process. First of all, allows free cholesterol efflux from macrophages to extracellular cholesterol acceptors and secondly, releases free cholesterol from lipoprotein-delivered cholesteryl esters in the liver for bile acid synthesis or direct secretion into the bile. In Mus musculus (Mouse), this protein is Liver carboxylesterase 1.